Consider the following 342-residue polypeptide: Small ribosomal subunit protein uS2 (342 aa).

The disordered stretch occupies residues 235–283 (EENAPFEQDEPRKPSQKPKQNRPENKPRFDKQAPRAAAKPEVKAEVKPE). Positions 255–283 (NRPENKPRFDKQAPRAAAKPEVKAEVKPE) are enriched in basic and acidic residues.

This sequence belongs to the universal ribosomal protein uS2 family.

The polypeptide is Small ribosomal subunit protein uS2 (Acholeplasma laidlawii (strain PG-8A)).